The sequence spans 430 residues: Aspartate aminotransferase, mitochondrial (430 aa).

The N-terminal 29 residues, M1–A29, are a transit peptide targeting the mitochondrion. T48 is subject to Phosphothreonine. K59 bears the N6-acetyllysine mark. Position 65 (G65) interacts with substrate. An N6-acetyllysine; alternate modification is found at K73. Residue K73 is modified to N6-succinyllysine; alternate. K82 bears the N6-acetyllysine mark. K90 carries the N6-acetyllysine; alternate modification. At K90 the chain carries N6-succinyllysine; alternate. Position 96 is a 3'-nitrotyrosine; alternate (Y96). The residue at position 96 (Y96) is a Phosphotyrosine; alternate. N6-acetyllysine; alternate is present on residues K107 and K122. An N6-succinyllysine; alternate mark is found at K107 and K122. S143 is subject to Phosphoserine. K159 carries the N6-acetyllysine; alternate modification. K159 carries the N6-succinyllysine; alternate modification. A substrate-binding site is contributed by W162. K185 carries the post-translational modification N6-acetyllysine; alternate. Residue K185 is modified to N6-succinyllysine; alternate. N215 lines the substrate pocket. At K227 the chain carries N6-succinyllysine. At K234 the chain carries N6-acetyllysine. An N6-acetyllysine; alternate mark is found at K279 and K296. An N6-(pyridoxal phosphate)lysine; alternate modification is found at K279. K296 is subject to N6-succinyllysine; alternate. At K302 the chain carries N6-acetyllysine. K309 carries the post-translational modification N6-acetyllysine; alternate. K309 carries the N6-succinyllysine; alternate modification. Position 313 is an asymmetric dimethylarginine (R313). T333 bears the Phosphothreonine mark. Position 338 is an N6-acetyllysine; alternate (K338). Residue K338 is modified to N6-succinyllysine; alternate. N6-acetyllysine is present on K345. K363 is subject to N6-acetyllysine; alternate. K363 carries the N6-succinyllysine; alternate modification. N6-acetyllysine occurs at positions 364 and 387. 2 positions are modified to N6-acetyllysine; alternate: K396 and K404. N6-succinyllysine; alternate occurs at positions 396 and 404. R407 contacts substrate.

The protein belongs to the class-I pyridoxal-phosphate-dependent aminotransferase family. As to quaternary structure, homodimer. Pyridoxal 5'-phosphate serves as cofactor.

The protein resides in the mitochondrion matrix. It is found in the cell membrane. The catalysed reaction is L-aspartate + 2-oxoglutarate = oxaloacetate + L-glutamate. It carries out the reaction L-kynurenine + 2-oxoglutarate = kynurenate + L-glutamate + H2O. Its function is as follows. Catalyzes the irreversible transamination of the L-tryptophan metabolite L-kynurenine to form kynurenic acid (KA). As a member of the malate-aspartate shuttle, it has a key role in the intracellular NAD(H) redox balance. Is important for metabolite exchange between mitochondria and cytosol, and for amino acid metabolism. Facilitates cellular uptake of long-chain free fatty acids. This is Aspartate aminotransferase, mitochondrial (GOT2) from Pongo abelii (Sumatran orangutan).